Consider the following 181-residue polypeptide: Protein CENTRORADIALIS (181 aa).

It belongs to the phosphatidylethanolamine-binding protein family. In terms of assembly, may form homodimers in solution.

The protein resides in the cytoplasm. In terms of biological role, expression of CEN leads to a morphological switch between shoot growth and the development of flower structures (inflorescence). May form complexes with phosphorylated ligands by interfering with kinases and their effectors. This is Protein CENTRORADIALIS (CEN) from Antirrhinum majus (Garden snapdragon).